The following is a 69-amino-acid chain: Putative membrane protein insertion efficiency factor (69 aa).

This sequence belongs to the UPF0161 family.

The protein localises to the cell inner membrane. Could be involved in insertion of integral membrane proteins into the membrane. The protein is Putative membrane protein insertion efficiency factor of Chromobacterium violaceum (strain ATCC 12472 / DSM 30191 / JCM 1249 / CCUG 213 / NBRC 12614 / NCIMB 9131 / NCTC 9757 / MK).